The chain runs to 730 residues: Patatin-like phospholipase domain-containing protein CIMG_04897 (730 aa).

A compositionally biased stretch (basic residues) spans 1–11 (MTANSSRRRLQ). The segment at 1–26 (MTANSSRRRLQMKSPRTDGDEKEEDY) is disordered. The helical transmembrane segment at 97–117 (WPFLLFVLSWIVFLGALYILT) threads the bilayer. The region spanning 281-472 (LCLSGGATLA…RTDIPLKALD (192 aa)) is the PNPLA domain. The GXSXG motif lies at 312 to 316 (GTSGG). Catalysis depends on Ser314, which acts as the Nucleophile. Asp459 serves as the catalytic Proton acceptor. The tract at residues 667–730 (GHFREAPTSH…QGQSSGTKIG (64 aa)) is disordered. The span at 721–730 (QGQSSGTKIG) shows a compositional bias: polar residues.

Belongs to the PLPL family.

The protein localises to the membrane. Its function is as follows. Probable lipid hydrolase. The sequence is that of Patatin-like phospholipase domain-containing protein CIMG_04897 from Coccidioides immitis (strain RS) (Valley fever fungus).